Here is a 336-residue protein sequence, read N- to C-terminus: Holliday junction branch migration complex subunit RuvB (336 aa).

Positions 1-184 are large ATPase domain (RuvB-L); that stretch reads MYDEERIVSG…FGIVGHMEYY (184 aa). ATP-binding positions include leucine 23, arginine 24, glycine 65, lysine 68, threonine 69, threonine 70, 131–133, arginine 174, tyrosine 184, and arginine 221; that span reads EDY. Threonine 69 serves as a coordination point for Mg(2+). The small ATPAse domain (RuvB-S) stretch occupies residues 185-255; the sequence is NEVDLSQIIK…IVQFALDLLR (71 aa). The tract at residues 258–336 is head domain (RuvB-H); it reads KVGLDRTDRK…HLGIKYNKEG (79 aa). Residues arginine 313 and arginine 318 each contribute to the DNA site.

It belongs to the RuvB family. As to quaternary structure, homohexamer. Forms an RuvA(8)-RuvB(12)-Holliday junction (HJ) complex. HJ DNA is sandwiched between 2 RuvA tetramers; dsDNA enters through RuvA and exits via RuvB. An RuvB hexamer assembles on each DNA strand where it exits the tetramer. Each RuvB hexamer is contacted by two RuvA subunits (via domain III) on 2 adjacent RuvB subunits; this complex drives branch migration. In the full resolvosome a probable DNA-RuvA(4)-RuvB(12)-RuvC(2) complex forms which resolves the HJ.

It is found in the cytoplasm. It carries out the reaction ATP + H2O = ADP + phosphate + H(+). Functionally, the RuvA-RuvB-RuvC complex processes Holliday junction (HJ) DNA during genetic recombination and DNA repair, while the RuvA-RuvB complex plays an important role in the rescue of blocked DNA replication forks via replication fork reversal (RFR). RuvA specifically binds to HJ cruciform DNA, conferring on it an open structure. The RuvB hexamer acts as an ATP-dependent pump, pulling dsDNA into and through the RuvAB complex. RuvB forms 2 homohexamers on either side of HJ DNA bound by 1 or 2 RuvA tetramers; 4 subunits per hexamer contact DNA at a time. Coordinated motions by a converter formed by DNA-disengaged RuvB subunits stimulates ATP hydrolysis and nucleotide exchange. Immobilization of the converter enables RuvB to convert the ATP-contained energy into a lever motion, pulling 2 nucleotides of DNA out of the RuvA tetramer per ATP hydrolyzed, thus driving DNA branch migration. The RuvB motors rotate together with the DNA substrate, which together with the progressing nucleotide cycle form the mechanistic basis for DNA recombination by continuous HJ branch migration. Branch migration allows RuvC to scan DNA until it finds its consensus sequence, where it cleaves and resolves cruciform DNA. In Ligilactobacillus salivarius (strain UCC118) (Lactobacillus salivarius), this protein is Holliday junction branch migration complex subunit RuvB.